The following is a 561-amino-acid chain: Guanine nucleotide-binding protein-like 3 (561 aa).

The span at 28–46 (HNRKLKKAAKKQGISRKAK) shows a compositional bias: basic residues. Disordered stretches follow at residues 28–58 (HNRK…APFK) and 76–110 (KEQN…KKAK). The stretch at 53-98 (NSAPFKEEVLREAEQRKQELETLKEQNKIVKQQEKAAKRKKEKDAA) forms a coiled coil. Residues 76-88 (KEQNKIVKQQEKA) show a composition bias toward basic and acidic residues. The 187-residue stretch at 133–319 (CQELNKVIEA…MIDSPGILAA (187 aa)) folds into the CP-type G domain. GTP-binding positions include 181–184 (NKID), 268–275 (GFPNVGKS), and 312–315 (DSPG). Residues 486–532 (ATTTDAEEEKMDTTTNTDEPEAESHISSTVEPIQEPTEKRKDKPAKE) form a disordered region. A compositionally biased stretch (basic and acidic residues) spans 521–532 (PTEKRKDKPAKE).

It belongs to the TRAFAC class YlqF/YawG GTPase family.

It is found in the nucleus. The protein resides in the nucleolus. Functionally, may play a role in regulating cellular proliferation. The protein is Guanine nucleotide-binding protein-like 3 (gnl3) of Danio rerio (Zebrafish).